Reading from the N-terminus, the 337-residue chain is Large ribosomal subunit protein uL10 (337 aa).

The interval 309–337 (EEVVEEQEEVKEEEEEESDMASGLGALFG) is disordered. Over residues 310 to 327 (EVVEEQEEVKEEEEEESD) the composition is skewed to acidic residues.

This sequence belongs to the universal ribosomal protein uL10 family. As to quaternary structure, part of the 50S ribosomal subunit. Forms part of the ribosomal stalk which helps the ribosome interact with GTP-bound translation factors. Forms a heptameric L10(L12)2(L12)2(L12)2 complex, where L10 forms an elongated spine to which the L12 dimers bind in a sequential fashion.

Functionally, forms part of the ribosomal stalk, playing a central role in the interaction of the ribosome with GTP-bound translation factors. The chain is Large ribosomal subunit protein uL10 from Methanococcoides burtonii (strain DSM 6242 / NBRC 107633 / OCM 468 / ACE-M).